Reading from the N-terminus, the 312-residue chain is Glyoxylate/hydroxypyruvate reductase A (312 aa).

R227 is a catalytic residue. Catalysis depends on H275, which acts as the Proton donor.

Belongs to the D-isomer specific 2-hydroxyacid dehydrogenase family. GhrA subfamily.

The protein localises to the cytoplasm. It carries out the reaction glycolate + NADP(+) = glyoxylate + NADPH + H(+). The catalysed reaction is (R)-glycerate + NAD(+) = 3-hydroxypyruvate + NADH + H(+). The enzyme catalyses (R)-glycerate + NADP(+) = 3-hydroxypyruvate + NADPH + H(+). Functionally, catalyzes the NADPH-dependent reduction of glyoxylate and hydroxypyruvate into glycolate and glycerate, respectively. The chain is Glyoxylate/hydroxypyruvate reductase A from Escherichia coli (strain UTI89 / UPEC).